The following is a 485-amino-acid chain: MNTSHVRVVTHMCGFLVWLYSLSMLPPMVVALFYKEKSLFVFFITFVIFFCIGGGAWYTTKKSGIQLRTRDGFIIIVMFWILFSVISAFPLWIDSELNLTFIDALFEGVSGITTTGATVIDDVSSLPRAYLYYRSQLNFIGGLGVIVLAVAVLPLLGIGGAKLYQSEMPGPFKDDKLTPRLADTSRTLWITYSLLGIACIVCYRLAGMPLFDAICHGISTVSLGGFSTHSESIGYFNNYLVELVAGSFSLLSAFNFTLWYIVISRKTIKPLIRDIELRFFLLIALGVIIVTSFQVWHIGMYDLHGSFIHSFFLASSMLTDNGLATQDYASWPTHTIVFLLLSSFFGGCIGSTCGGIKSLRFLILFKQSKHEINQLSHPRALLSVNVGGKIVTDRVMRSVWSFFFLYTLFTVFFILVLNGMGYDFLTSFATVAACINNMGLGFGATASSFGVLNDIAKCLMCIAMILGRLEIYPVIILFSGFFWRS.

The Cytoplasmic portion of the chain corresponds to 1–5; sequence MNTSH. A helical transmembrane segment spans residues 6 to 32; sequence VRVVTHMCGFLVWLYSLSMLPPMVVAL. At 33–38 the chain is on the periplasmic side; that stretch reads FYKEKS. Residues 39 to 60 traverse the membrane as a helical segment; it reads LFVFFITFVIFFCIGGGAWYTT. The Cytoplasmic portion of the chain corresponds to 61-68; it reads KKSGIQLR. The helical transmembrane segment at 69–93 threads the bilayer; the sequence is TRDGFIIIVMFWILFSVISAFPLWI. An intramembrane region (helical; Pore-forming) is located at residues 101–112; the sequence is FIDALFEGVSGI. Residues 113–118 lie within the membrane without spanning it; sequence TTTGAT. Residues 113-118 are selectivity filter part 1; sequence TTTGAT. 2 residues coordinate K(+): T114 and T115. Topologically, residues 119–127 are periplasmic; the sequence is VIDDVSSLP. A helical membrane pass occupies residues 128-153; the sequence is RAYLYYRSQLNFIGGLGVIVLAVAVL. Residues 154 to 180 are Cytoplasmic-facing; that stretch reads PLLGIGGAKLYQSEMPGPFKDDKLTPR. The helical transmembrane segment at 181-205 threads the bilayer; that stretch reads LADTSRTLWITYSLLGIACIVCYRL. Residues 206-208 lie on the Periplasmic side of the membrane; it reads AGM. P209 is an intramembrane region. The helical; Pore-forming intramembrane region spans 210–221; that stretch reads LFDAICHGISTV. An intramembrane segment occupies 222-227; the sequence is SLGGFS. Residues 222-227 are selectivity filter part 2; the sequence is SLGGFS. K(+) contacts are provided by L223 and G224. The Periplasmic segment spans residues 228 to 237; that stretch reads THSESIGYFN. Residues 238-253 constitute an intramembrane region (helical); sequence NYLVELVAGSFSLLSA. The helical transmembrane segment at 277-297 threads the bilayer; that stretch reads LRFFLLIALGVIIVTSFQVWH. Residues 303–318 constitute an intramembrane region (helical; Pore-forming); sequence LHGSFIHSFFLASSML. An intramembrane segment occupies 319 to 324; the sequence is TDNGLA. The selectivity filter part 3 stretch occupies residues 319-324; it reads TDNGLA. Residues D320 and N321 each contribute to the K(+) site. Residues 325-332 are Periplasmic-facing; the sequence is TQDYASWP. An intramembrane region (helical) is located at residues 333-344; that stretch reads THTIVFLLLSSF. Residues 345-357 constitute an intramembrane region (note=Loop between two helices); sequence FGGCIGSTCGGIK. A helical membrane pass occupies residues 392 to 419; the sequence is TDRVMRSVWSFFFLYTLFTVFFILVLNG. The Periplasmic portion of the chain corresponds to 420–421; sequence MG. An intramembrane segment occupies 422-423; sequence YD. The segment at residues 424–434 is an intramembrane region (helical; Pore-forming); the sequence is FLTSFATVAAC. The stretch at 435 to 441 is an intramembrane region; that stretch reads INNMGLG. The segment at 436–441 is selectivity filter part 4; the sequence is NNMGLG. Positions 437 and 438 each coordinate K(+). Topologically, residues 442–453 are periplasmic; sequence FGATASSFGVLN. The segment at residues 454-465 is an intramembrane region (helical); that stretch reads DIAKCLMCIAMI.

The protein belongs to the TrkH potassium transport family.

The protein localises to the cell inner membrane. Low-affinity potassium transport system. Interacts with Trk system potassium uptake protein TrkA. Requires TrkE (sapD) for maximal transport activity, low activity is seen in its absence; no further stimulation is seen with SapF. Transport in the absence of SapD is dependent on a high membrane potential and a high cytoplasmic ATP concentration, suggesting this protein may be able to interact with other ATP-binding proteins. Can transport potassium and rubidium. The chain is Trk system potassium uptake protein TrkG (trkG) from Escherichia coli (strain K12).